A 615-amino-acid chain; its full sequence is 1-deoxy-D-xylulose-5-phosphate synthase (615 aa).

Thiamine diphosphate contacts are provided by residues His76 and 117–119; that span reads GHS. Residue Asp148 coordinates Mg(2+). Thiamine diphosphate-binding positions include 149 to 150, Asn177, Tyr284, and Glu365; that span reads GA. Asn177 contributes to the Mg(2+) binding site.

The protein belongs to the transketolase family. DXPS subfamily. Homodimer. Mg(2+) is required as a cofactor. It depends on thiamine diphosphate as a cofactor.

The enzyme catalyses D-glyceraldehyde 3-phosphate + pyruvate + H(+) = 1-deoxy-D-xylulose 5-phosphate + CO2. Its pathway is metabolic intermediate biosynthesis; 1-deoxy-D-xylulose 5-phosphate biosynthesis; 1-deoxy-D-xylulose 5-phosphate from D-glyceraldehyde 3-phosphate and pyruvate: step 1/1. In terms of biological role, catalyzes the acyloin condensation reaction between C atoms 2 and 3 of pyruvate and glyceraldehyde 3-phosphate to yield 1-deoxy-D-xylulose-5-phosphate (DXP). The protein is 1-deoxy-D-xylulose-5-phosphate synthase of Francisella tularensis subsp. mediasiatica (strain FSC147).